A 356-amino-acid chain; its full sequence is Tyrosine recombinase XerS (356 aa).

One can recognise a Core-binding (CB) domain in the interval 16–121 (TMPWYILEYY…ALSSLYKYLT (106 aa)). The region spanning 169-354 (EFLQYIDTEY…VNDEQKNALD (186 aa)) is the Tyr recombinase domain. Catalysis depends on residues Arg-210, Lys-234, His-306, Arg-309, and His-332. The active-site O-(3'-phospho-DNA)-tyrosine intermediate is Tyr-341.

The protein belongs to the 'phage' integrase family. XerS subfamily.

The protein resides in the cytoplasm. FtsK is required for recombination. Its function is as follows. Site-specific tyrosine recombinase, which acts by catalyzing the cutting and rejoining of the recombining DNA molecules. Essential to convert dimers of the bacterial chromosome into monomers to permit their segregation at cell division. The polypeptide is Tyrosine recombinase XerS (Streptococcus sanguinis (strain SK36)).